Here is a 499-residue protein sequence, read N- to C-terminus: Probable cytosol aminopeptidase (499 aa).

The Mn(2+) site is built by Lys-263 and Asp-268. Lys-275 is an active-site residue. Mn(2+) contacts are provided by Asp-286, Asp-345, and Glu-347. The active site involves Arg-349.

The protein belongs to the peptidase M17 family. Requires Mn(2+) as cofactor.

The protein resides in the cytoplasm. The enzyme catalyses Release of an N-terminal amino acid, Xaa-|-Yaa-, in which Xaa is preferably Leu, but may be other amino acids including Pro although not Arg or Lys, and Yaa may be Pro. Amino acid amides and methyl esters are also readily hydrolyzed, but rates on arylamides are exceedingly low.. It carries out the reaction Release of an N-terminal amino acid, preferentially leucine, but not glutamic or aspartic acids.. Functionally, presumably involved in the processing and regular turnover of intracellular proteins. Catalyzes the removal of unsubstituted N-terminal amino acids from various peptides. The protein is Probable cytosol aminopeptidase of Chlamydia trachomatis serovar A (strain ATCC VR-571B / DSM 19440 / HAR-13).